Here is a 313-residue protein sequence, read N- to C-terminus: Formimidoylglutamase (313 aa).

6 residues coordinate Mn(2+): His130, Asp155, His157, Asp159, Asp241, and Asp243.

The protein belongs to the arginase family. Mn(2+) serves as cofactor.

The catalysed reaction is N-formimidoyl-L-glutamate + H2O = formamide + L-glutamate. Its pathway is amino-acid degradation; L-histidine degradation into L-glutamate; L-glutamate from N-formimidoyl-L-glutamate (hydrolase route): step 1/1. Its function is as follows. Catalyzes the conversion of N-formimidoyl-L-glutamate to L-glutamate and formamide. The chain is Formimidoylglutamase from Salmonella newport (strain SL254).